The sequence spans 663 residues: UvrABC system protein B (663 aa).

Basic and acidic residues predominate over residues methionine 1–phenylalanine 10. Residues methionine 1–proline 23 are disordered. One can recognise a Helicase ATP-binding domain in the interval aspartate 31–arginine 418. Glycine 44 to threonine 51 provides a ligand contact to ATP. Positions tyrosine 97–valine 120 match the Beta-hairpin motif. The Helicase C-terminal domain maps to glutamine 435–isoleucine 601. A UVR domain is found at lysine 627–methionine 662.

The protein belongs to the UvrB family. Forms a heterotetramer with UvrA during the search for lesions. Interacts with UvrC in an incision complex.

It is found in the cytoplasm. The UvrABC repair system catalyzes the recognition and processing of DNA lesions. A damage recognition complex composed of 2 UvrA and 2 UvrB subunits scans DNA for abnormalities. Upon binding of the UvrA(2)B(2) complex to a putative damaged site, the DNA wraps around one UvrB monomer. DNA wrap is dependent on ATP binding by UvrB and probably causes local melting of the DNA helix, facilitating insertion of UvrB beta-hairpin between the DNA strands. Then UvrB probes one DNA strand for the presence of a lesion. If a lesion is found the UvrA subunits dissociate and the UvrB-DNA preincision complex is formed. This complex is subsequently bound by UvrC and the second UvrB is released. If no lesion is found, the DNA wraps around the other UvrB subunit that will check the other stand for damage. In Streptococcus pyogenes serotype M28 (strain MGAS6180), this protein is UvrABC system protein B.